The primary structure comprises 111 residues: Colipase (111 aa).

The first 17 residues, 1–17 (MEKVLALVLLTLAVAYA), serve as a signal peptide directing secretion. Residues 18 to 22 (APDPR) constitute a propeptide, enterostatin, activation peptide. 5 disulfides stabilise this stretch: cysteine 34–cysteine 45, cysteine 40–cysteine 56, cysteine 44–cysteine 78, cysteine 66–cysteine 86, and cysteine 80–cysteine 104.

This sequence belongs to the colipase family. In terms of assembly, forms a 1:1 stoichiometric complex with pancreatic lipase. As to expression, expressed by the pancreas.

The protein localises to the secreted. In terms of biological role, colipase is a cofactor of pancreatic lipase. It allows the lipase to anchor itself to the lipid-water interface. Without colipase the enzyme is washed off by bile salts, which have an inhibitory effect on the lipase. Its function is as follows. Enterostatin has a biological activity as a satiety signal. In Myocastor coypus (Coypu), this protein is Colipase (CLPS).